Consider the following 286-residue polypeptide: Bifunctional protein FolD (286 aa).

NADP(+) contacts are provided by residues 165–167 (GRS) and S190.

This sequence belongs to the tetrahydrofolate dehydrogenase/cyclohydrolase family. In terms of assembly, homodimer.

It catalyses the reaction (6R)-5,10-methylene-5,6,7,8-tetrahydrofolate + NADP(+) = (6R)-5,10-methenyltetrahydrofolate + NADPH. The catalysed reaction is (6R)-5,10-methenyltetrahydrofolate + H2O = (6R)-10-formyltetrahydrofolate + H(+). Its pathway is one-carbon metabolism; tetrahydrofolate interconversion. Its function is as follows. Catalyzes the oxidation of 5,10-methylenetetrahydrofolate to 5,10-methenyltetrahydrofolate and then the hydrolysis of 5,10-methenyltetrahydrofolate to 10-formyltetrahydrofolate. The chain is Bifunctional protein FolD from Staphylococcus epidermidis (strain ATCC 12228 / FDA PCI 1200).